We begin with the raw amino-acid sequence, 137 residues long: uncharacterized protein (137 aa).

An N-terminal signal peptide occupies residues 1–15 (MKKLAIAGALLLLAG). Residue cysteine 16 is the site of N-palmitoyl cysteine attachment. Cysteine 16 carries S-diacylglycerol cysteine lipidation.

It localises to the cell membrane. This is an uncharacterized protein from Escherichia coli (strain K12).